The sequence spans 230 residues: Cytidylate kinase (230 aa).

Residue 11–19 (GPAAAGKST) coordinates ATP.

The protein belongs to the cytidylate kinase family. Type 1 subfamily.

It localises to the cytoplasm. It carries out the reaction CMP + ATP = CDP + ADP. It catalyses the reaction dCMP + ATP = dCDP + ADP. The protein is Cytidylate kinase of Oceanobacillus iheyensis (strain DSM 14371 / CIP 107618 / JCM 11309 / KCTC 3954 / HTE831).